We begin with the raw amino-acid sequence, 1015 residues long: Probable beta-galactosidase B (1015 aa).

The first 21 residues, 1–21 (MAHIYRLLLLLLSNLWFSAAA), serve as a signal peptide directing secretion. A glycan (N-linked (GlcNAc...) asparagine) is linked at Asn-23. Residue Tyr-90 participates in substrate binding. The N-linked (GlcNAc...) asparagine glycan is linked to Asn-100. 3 residues coordinate substrate: Asn-135, Ala-136, and Glu-137. Asn-172 carries an N-linked (GlcNAc...) asparagine glycan. Position 195 (Asn-195) interacts with substrate. Glu-196 (proton donor) is an active-site residue. Asn-211 carries N-linked (GlcNAc...) asparagine glycosylation. Tyr-265 provides a ligand contact to substrate. A disulfide bridge links Cys-271 with Cys-324. Glu-308 (nucleophile) is an active-site residue. Tyr-373 provides a ligand contact to substrate. N-linked (GlcNAc...) asparagine glycans are attached at residues Asn-411, Asn-441, Asn-456, Asn-554, Asn-679, Asn-735, Asn-775, Asn-821, and Asn-878.

The protein belongs to the glycosyl hydrolase 35 family.

Its subcellular location is the secreted. The enzyme catalyses Hydrolysis of terminal non-reducing beta-D-galactose residues in beta-D-galactosides.. In terms of biological role, cleaves beta-linked terminal galactosyl residues from gangliosides, glycoproteins, and glycosaminoglycans. In Neosartorya fischeri (strain ATCC 1020 / DSM 3700 / CBS 544.65 / FGSC A1164 / JCM 1740 / NRRL 181 / WB 181) (Aspergillus fischerianus), this protein is Probable beta-galactosidase B (lacB).